The primary structure comprises 699 residues: Kinesin-II 85 kDa subunit (699 aa).

Positions 10–342 (NVRVVVRCRP…LRYANRAKNI (333 aa)) constitute a Kinesin motor domain. Residue 97-104 (GQTGTGKT) coordinates ATP. A coiled-coil region spans residues 341–619 (NIKNKAKINE…EDIGEWQLKC (279 aa)). 3 disordered regions span residues 369-415 (KQIS…LSPE), 432-456 (EEKK…ESEL), and 660-699 (GMKY…ALLQ). A compositionally biased stretch (acidic residues) spans 376 to 395 (EGLDDDEESGSEESGDEEAG). Over residues 400-411 (KKKRKGKNPKRK) the composition is skewed to basic residues. A globular region spans residues 620 to 699 (VAYTGNNMRK…MASSIDALLQ (80 aa)). Residues 667–679 (QGKSGRPKTSSGR) show a composition bias toward polar residues.

It belongs to the TRAFAC class myosin-kinesin ATPase superfamily. Kinesin family. Kinesin II subfamily. As to quaternary structure, heterotrimer of a 115 kDa subunit (KAP115) and two kinesin-like subunits of 95 kDa (KRP95) and 85 kDa (KRP85). In terms of processing, the N-terminus is blocked.

The protein resides in the cytoplasm. It localises to the cytoskeleton. This is Kinesin-II 85 kDa subunit (KRP85) from Strongylocentrotus purpuratus (Purple sea urchin).